The following is a 356-amino-acid chain: tRNA N6-adenosine threonylcarbamoyltransferase (356 aa).

Positions 116 and 120 each coordinate Fe cation. Substrate-binding positions include 139-143, Asp174, Gly187, Asp191, and Asn281; that span reads IVSGG. A Fe cation-binding site is contributed by Asp309.

This sequence belongs to the KAE1 / TsaD family. Fe(2+) serves as cofactor.

It localises to the cytoplasm. The enzyme catalyses L-threonylcarbamoyladenylate + adenosine(37) in tRNA = N(6)-L-threonylcarbamoyladenosine(37) in tRNA + AMP + H(+). In terms of biological role, required for the formation of a threonylcarbamoyl group on adenosine at position 37 (t(6)A37) in tRNAs that read codons beginning with adenine. Is involved in the transfer of the threonylcarbamoyl moiety of threonylcarbamoyl-AMP (TC-AMP) to the N6 group of A37, together with TsaE and TsaB. TsaD likely plays a direct catalytic role in this reaction. The chain is tRNA N6-adenosine threonylcarbamoyltransferase from Frankia alni (strain DSM 45986 / CECT 9034 / ACN14a).